The following is a 1119-amino-acid chain: MEIKRFGRIREVIPLPPLTEIQVESYKKALQADVPPEKRENVGIQAAFKETFPIEEGDKGKGGLVLDFLEYRIGDPPFSQDECREKDLTYQAPLYARLQLIHKDTGLIKEDEVFLGHLPLMTEDGSFIINGADRVIVSQIHRSPGVYFTPDPARPGRYIASIIPLPKRGPWIDLEVEASGVVTMKVNKRKFPLVLLLRVLGYDQETLVRELSAYGDLVQGLLDEAVLAMRPEEAMVRLFTLLRPGDPPKKDKALAYLFGLLADPKRYDLGEAGRYKAEEKLGVGLSGRTLVRFEDGEFKDEVFLPTLRYLFALTAGVPGHEVDDIDHLGNRRIRTVGELMADQFRVGLARLARGVRERMVMGSPDTLTPAKLVNSRPLEAALREFFSRSQLSQFKDETNPLSSLRHKRRISALGPGGLTRERAGFDVRDVHRTHYGRICPVETPEGANIGLITSLAAYARVDALGFIRTPYRRVKNGVVTEEVVYMTASEEDRYTIAQANTPLEGDRIATDRVVARRRGEPVIVAPEEVEFMDVSPKQVFSLNTNLIPFLEHDDANRALMGSNMQTQAVPLIRAQAPVVMTGLEERVVRDSLAALYAEEDGEVVKVDGTRIAVRYEDGRLVEHPLRRYARSNQGTAFDQRPRVRVGQRVKKGDLLADGPASEEGFLALGQNVLVAIMPFDGYNFEDAIVISEELLKRDFYTSIHIERYEIEARDTKLGPERITRDIPHLSEAALRDLDEEGIVRIGAEVKPGDILVGRTSFKGEQEPSPEERLLRSIFGEKARDVKDTSLRVPPGEGGIVVGRLRLRRGDPGVELKPGVREVVRVFVAQKRKLQVGDKLANRHGNKGVVAKILPVEDMPHLPDGTPVDVILNPLGVPSRMNLGQILETHLGLAGYFLGQRYISPVFDGATEPEIKELLAEAFNLYFGKRQGEGFGVDKREKEVLARAEKLGLVSPGKSPEEQLKELFDLGKVVLYDGRTGEPFEGPIVVGQMFIMKLYHMVEDKMHARSTGPYSLITQQPLGGKAQFGGQRFGEMEVWALEAYGAAHTLQEMLTIKSDDIEGRNAAYQAIIKGEDVPEPSVPESFRVLVKELQALALDVQTLDEKDNPVDIFEGLASKR.

Belongs to the RNA polymerase beta chain family. As to quaternary structure, the RNAP catalytic core consists of 2 alpha, 1 beta, 1 beta' and 1 omega subunit. When a sigma factor is associated with the core the holoenzyme is formed, which can initiate transcription.

The enzyme catalyses RNA(n) + a ribonucleoside 5'-triphosphate = RNA(n+1) + diphosphate. In terms of biological role, DNA-dependent RNA polymerase catalyzes the transcription of DNA into RNA using the four ribonucleoside triphosphates as substrates. The chain is DNA-directed RNA polymerase subunit beta from Thermus aquaticus.